Here is a 72-residue protein sequence, read N- to C-terminus: Long neurotoxin OH-17 (72 aa).

5 disulfide bridges follow: C3-C21, C14-C42, C27-C31, C46-C57, and C58-C63.

This sequence belongs to the three-finger toxin family. Long-chain subfamily. Type II alpha-neurotoxin sub-subfamily. As to expression, expressed by the venom gland.

It localises to the secreted. In terms of biological role, binds with high affinity to muscular (alpha-1/CHRNA1) and neuronal (alpha-7/CHRNA7) nicotinic acetylcholine receptor (nAChR) and inhibits acetylcholine from binding to the receptor, thereby impairing neuromuscular and neuronal transmission. This chain is Long neurotoxin OH-17, found in Ophiophagus hannah (King cobra).